Reading from the N-terminus, the 161-residue chain is Stress response protein YvgO (161 aa).

The first 26 residues, 1–26 (MKRIRIPMTLALGAALTIAPLSFASA), serve as a signal peptide directing secretion.

The protein is Stress response protein YvgO (yvgO) of Bacillus subtilis (strain 168).